Here is a 321-residue protein sequence, read N- to C-terminus: MKVAALFLCGLALATASPSWDHFKTQYGRKYGDAKEELYRQRVFQQNEQLIEDFNKKFENGEVTFKVAMNQFGDMTNEEFNAVMKGYKKGSRGEPKAVFTAEAGPMAADVDWRTKALVTPVKDQEQCGSCWAFSATGALEGQHFLKNDELVSLSEQQLVDCSTDYGNDGCGGGWMTSAFDYIKDNGGIDTESSYPYEAEDRSCRFDANSIGAICTGSVEVQHTEEALQEAVSGVGPISVAIDASHFSFQFYSSGVYYEQNCSPTFLDHGVLAVGYGTESTKDYWLVKNSWGSSWGDAGYIKMSRNRDNNCGIASEPSYPTV.

The first 16 residues, 1–16 (MKVAALFLCGLALATA), serve as a signal peptide directing secretion. Positions 17–106 (SPSWDHFKTQ…AVFTAEAGPM (90 aa)) are cleaved as a propeptide — activation peptide. 3 disulfide bridges follow: cysteine 127–cysteine 170, cysteine 161–cysteine 203, and cysteine 261–cysteine 310. Cysteine 130 is a catalytic residue. Active-site residues include histidine 268 and asparagine 288.

Belongs to the peptidase C1 family.

Its activity is regulated as follows. Inhibited by E-64, antipain, leupeptin, heavy metal ions, iodoacetic acid, dithionitrobenzene, p-hydroxymercuri-benzoate; activated by mercaptoethanol and dithiothreitol. The protein is Digestive cysteine proteinase 3 (LCP3) of Homarus americanus (American lobster).